We begin with the raw amino-acid sequence, 368 residues long: N-acetylneuraminate epimerase 2 (368 aa).

The N-terminal stretch at 1 to 19 is a signal peptide; the sequence is MNKTITALAILMASFAANA. Kelch repeat units lie at residues 40 to 84, 86 to 137, 139 to 173, 174 to 219, 222 to 265, 287 to 336, and 338 to 367; these read TVYI…AFID, NLYV…FVHN, KAYV…KINA, YYFD…VNKG, TWLI…VAGG, ENYQ…LWNN, and LLII…VTVQ. Glutamate 228 functions as the Proton acceptor in the catalytic mechanism.

Belongs to the NanM family. Homodimer.

Its subcellular location is the periplasm. It catalyses the reaction N-acetyl-alpha-neuraminate = N-acetyl-beta-neuraminate. Its function is as follows. Converts alpha-N-acetylneuranimic acid (Neu5Ac) to the beta-anomer, accelerating the equilibrium between the alpha- and beta-anomers. Probably facilitates sialidase-negative bacteria to compete successfully for limited amounts of extracellular Neu5Ac, which is likely taken up in the beta-anomer. In addition, the rapid removal of sialic acid from solution might be advantageous to the bacterium to damp down host responses. The sequence is that of N-acetylneuraminate epimerase 2 from Escherichia coli O6:H1 (strain CFT073 / ATCC 700928 / UPEC).